A 249-amino-acid polypeptide reads, in one-letter code: MQMAPQMGYDRAITVFSPDGRLFQVEYAREAVKRGTTAVGIKAADGVVLLVDKRITSRLVEAESIEKIFQIDDHIGAATSGLVADARSLVDRARVEAQVNRVSYDEPIGVEVISKKICDHKQTYTQYGGVRPYGTALLIAGVDDNLPRLFETDPSGALLEYKATAIGAGRNAVVEVFEAEYRQDMNMDAAILLGMDALYRAAEGKFDASTLEVGIVSLQDKKFRKLVPEEVENYVQQILEKHKETENKE.

The protein belongs to the peptidase T1A family. In terms of assembly, the 20S proteasome core is composed of 14 alpha and 14 beta subunits that assemble into four stacked heptameric rings, resulting in a barrel-shaped structure. The two inner rings, each composed of seven catalytic beta subunits, are sandwiched by two outer rings, each composed of seven alpha subunits. The catalytic chamber with the active sites is on the inside of the barrel. Has a gated structure, the ends of the cylinder being occluded by the N-termini of the alpha-subunits. Is capped at one or both ends by the proteasome regulatory ATPase, PAN.

It is found in the cytoplasm. Its activity is regulated as follows. The formation of the proteasomal ATPase PAN-20S proteasome complex, via the docking of the C-termini of PAN into the intersubunit pockets in the alpha-rings, triggers opening of the gate for substrate entry. Interconversion between the open-gate and close-gate conformations leads to a dynamic regulation of the 20S proteasome proteolysis activity. Functionally, component of the proteasome core, a large protease complex with broad specificity involved in protein degradation. The protein is Proteasome subunit alpha of Methanosarcina barkeri (strain Fusaro / DSM 804).